The chain runs to 143 residues: MSMMSEFKEFALKGNVMDLAVGVIIGGAFSGITNSLVEDIIMPIVAFIAGGELNFKNMFILLGDAPEGVAMTYDALKEAGVPLLAYGSFITVLINFLILAFIIFMMVKGMNKMRRKNEVEEVVEETPSEEVLLLREISQKLSK.

3 helical membrane-spanning segments follow: residues 16-36 (VMDLAVGVIIGGAFSGITNSL), 40-60 (IIMPIVAFIAGGELNFKNMFI), and 87-107 (GSFITVLINFLILAFIIFMMV).

Belongs to the MscL family. Homopentamer.

The protein resides in the cell inner membrane. Its function is as follows. Channel that opens in response to stretch forces in the membrane lipid bilayer. May participate in the regulation of osmotic pressure changes within the cell. The chain is Large-conductance mechanosensitive channel from Psychrobacter sp. (strain PRwf-1).